The sequence spans 158 residues: Transcriptional repressor NrdR (158 aa).

A zinc finger spans residues 3–34 (CPFCGSLDTQVIDSRANEAGDAIRRRRRCAAC). One can recognise an ATP-cone domain in the interval 49-139 (PQIVKTNGTR…VYKSFKDPDD (91 aa)).

It belongs to the NrdR family. Zn(2+) serves as cofactor.

Negatively regulates transcription of bacterial ribonucleotide reductase nrd genes and operons by binding to NrdR-boxes. The chain is Transcriptional repressor NrdR from Thiobacillus denitrificans (strain ATCC 25259 / T1).